The primary structure comprises 105 residues: uncharacterized protein (105 aa).

The protein belongs to the EspC family.

Functionally, may be involved in assembly of the ESX-1 / type VII specialized secretion system (T7SS), which exports several proteins including EsxA and EsxB. Involved in DNA conjugation, in at least recipient strain. This is an uncharacterized protein from Mycolicibacterium smegmatis (strain MKD8) (Mycobacterium smegmatis).